We begin with the raw amino-acid sequence, 504 residues long: Sodium-coupled neutral amino acid symporter 2 (504 aa).

The disordered stretch occupies residues 1 to 28 (MNKAPAQMSRFNIAPDMDSSSTNSNEYT). Topologically, residues 1 to 79 (MNKAPAQMSR…SPGSASFGMS (79 aa)) are cytoplasmic. The tract at residues 1–99 (MNKAPAQMSR…SGILGLSYAM (99 aa)) is regulates protein turnover upon amino acid deprivation. The segment covering 19–28 (SSSTNSNEYT) has biased composition (low complexity). The chain crosses the membrane as a helical span at residues 80–99 (VFNLGNAIMGSGILGLSYAM). N85 lines the Na(+) pocket. The Extracellular segment spans residues 100-105 (ANTGIA). Residues 106 to 126 (MFVILLVAVAIFSLYSVHLLL) form a helical membrane-spanning segment. The Cytoplasmic segment spans residues 127 to 161 (KTANEGGSLVYEQLGYKAFGIPGKLAASCSITMQN). Residues 162–180 (FGAMASYLYIVKYELPIVI) traverse the membrane as a helical segment. Topologically, residues 181-189 (RAFLDSNDN) are extracellular. The helical transmembrane segment at 190-210 (AWYTNGDYLVLIVTMSIILPL) threads the bilayer. The Cytoplasmic segment spans residues 211–218 (SLLKNLGY). The chain crosses the membrane as a helical span at residues 219 to 239 (LGYTSGFSLLCMVFFLIVVIY). Residues 240-285 (KKFQIPCPLPENFINITVNVSQPPQTNNSTDEECCKPKYFIFNSQT) lie on the Extracellular side of the membrane. The cysteines at positions 246 and 274 are disulfide-linked. 2 N-linked (GlcNAc...) asparagine glycosylation sites follow: N254 and N258. Residues 286-306 (VYAVPILTFAFVCHPAILPMY) form a helical membrane-spanning segment. At 307–322 (EELKDRSRRKMQNVAN) the chain is on the cytoplasmic side. Residues 323-343 (VSFLGMFIMYLLAALFGYLTF) form a helical membrane-spanning segment. Residues 344–364 (NEAVEPELLHTYSKVYNFDVV) are Extracellular-facing. The helical transmembrane segment at 365–385 (LLIVRLAVLTAVTLTVPVVLF) threads the bilayer. Residue T379 participates in Na(+) binding. The Cytoplasmic segment spans residues 386-406 (PIRTSVNHLLGASKEFSWPRH). Residues 407–427 (ICITVALLVCVNILVIFVPTI) form a helical membrane-spanning segment. Over 428–429 (RD) the chain is Extracellular. Residues 430 to 450 (IFGFIGASAAAMLIFILPSAF) form a helical membrane-spanning segment. Residues 451–465 (YIKLVKKESMKSVQK) are Cytoplasmic-facing. A helical membrane pass occupies residues 466 to 488 (IGATLFLIMGFLVMTGSMALIIM). The Extracellular portion of the chain corresponds to 489–504 (DWIHNALSSEEHTGGH).

This sequence belongs to the amino acid/polyamine transporter 2 family.

Its subcellular location is the cell membrane. It carries out the reaction L-alanine(in) + Na(+)(in) = L-alanine(out) + Na(+)(out). The enzyme catalyses glycine(in) + Na(+)(in) = glycine(out) + Na(+)(out). The catalysed reaction is L-serine(in) + Na(+)(in) = L-serine(out) + Na(+)(out). It catalyses the reaction L-proline(in) + Na(+)(in) = L-proline(out) + Na(+)(out). It carries out the reaction L-methionine(in) + Na(+)(in) = L-methionine(out) + Na(+)(out). The enzyme catalyses L-histidine(in) + Na(+)(in) = L-histidine(out) + Na(+)(out). The catalysed reaction is L-asparagine(in) + Na(+)(in) = L-asparagine(out) + Na(+)(out). It catalyses the reaction L-glutamine(in) + Na(+)(in) = L-glutamine(out) + Na(+)(out). It carries out the reaction L-threonine(in) + Na(+)(in) = L-threonine(out) + Na(+)(out). The enzyme catalyses L-leucine(in) + Na(+)(in) = L-leucine(out) + Na(+)(out). The catalysed reaction is L-phenylalanine(in) + Na(+)(in) = L-phenylalanine(out) + Na(+)(out). Inhibited by N-methyl-D-glucamine. Inhibited by choline. Allosteric regulation of sodium ions binding by pH. Functionally, symporter that cotransports neutral amino acids and sodium ions from the extracellular to the intracellular side of the cell membrane. The transport is pH-sensitive, Li(+)-intolerant, electrogenic, driven by the Na(+) electrochemical gradient and cotransports of neutral amino acids and sodium ions with a stoichiometry of 1:1. This Danio rerio (Zebrafish) protein is Sodium-coupled neutral amino acid symporter 2.